The chain runs to 614 residues: MGDWMTVTDPGLSSESKTISQYTSETKMSPSSLYSQQVLCSSIPLSKNVHSFFSAFCTEDNIEQSISYLDQELTTFGFPSLYEESKGKETKRELNIVAVLNCMNELLVLQRKNLLAQENVETQNLKLGSDMDHLQSCYSKLKEQLETSRREMIGLQERDRQLQCKNRNLHQLLKNEKDEVQKLQNIIASRATQYNHDMKRKEREYNKLKERLHQLVMNKKDKKIAMDILNYVGRADGKRGSWRTGKTEARNEDEMYKILLNDYEYRQKQILMENAELKKVLQQMKKEMISLLSPQKKKPRERVDDSTGTVISDVEEDAGELSRESMWDLSCETVREQLTNSIRKQWRILKSHVEKLDNQVSKVHLEGFNDEDVISRQDHEQETEKLELEIQQCKEMIKTQQQLLQQQLATAYDDDTTSLLRDCYLLEEKERLKEEWSLFKEQKKNFERERRSFTEAAIRLGLERKAFEEERASWLKQQFLNMTTFDHQNSENVKLFSAFSGSSDWDNLIVHSRQPQKKPHSVSNGSPVCMSKLTKSLPASPSTSDFCQTRSCISEHSSINVLNITAEEIKPNQVGGECTNQKWSVASRPGSQEGCYSGCSLSYTNSHVEKDDLP.

Coiled-coil stretches lie at residues 131-227 and 266-293; these read MDHL…IAMD and RQKQ…SLLS. A phosphoserine mark is found at Ser290, Ser293, and Ser312. The disordered stretch occupies residues 292–317; sequence LSPQKKKPRERVDDSTGTVISDVEED. A coiled-coil region spans residues 374 to 460; it reads ISRQDHEQET…RSFTEAAIRL (87 aa). Phosphoserine occurs at positions 536, 540, and 542.

The protein belongs to the ADIP family. As to quaternary structure, interacts with afadin and alpha-actinin. Interacts with VAV2. Interacts with SSX2 and SSX3. Does not interact with SSX1 and SSX4. Interacts with PCM1. Interacts with WRAP73. Widely expressed, with the highest expression in brain, intermediate expression in kidney, testis, spinal cord, liver, heart, lung, skeletal muscle, ovary, fetal liver and fetal brain, and little to no expression in pancreas and spleen. All specific brain regions showed intermediate to high expression, with highest expression in amygdala. Also expressed in fetal tissues, mainly in liver and brain.

Its subcellular location is the cell junction. It localises to the adherens junction. The protein localises to the nucleus. It is found in the cytoplasm. The protein resides in the cytoskeleton. Its subcellular location is the microtubule organizing center. It localises to the centrosome. The protein localises to the centriolar satellite. It is found in the cilium basal body. Its function is as follows. Belongs to an adhesion system, which plays a role in the organization of homotypic, interneuronal and heterotypic cell-cell adherens junctions (AJs). May connect the nectin-afadin and E-cadherin-catenin system through alpha-actinin and may be involved in organization of the actin cytoskeleton at AJs through afadin and alpha-actinin. Involved in cell movement: localizes at the leading edge of moving cells in response to PDGF and is required for the formation of the leading edge and the promotion of cell movement, possibly via activation of Rac signaling. Acts as a centrosome maturation factor, probably by maintaining the integrity of the pericentriolar material and proper microtubule nucleation at mitotic spindle poles. The function seems to implicate at least in part WRAP73; the SSX2IP:WRAP73 complex is proposed to act as regulator of spindle anchoring at the mitotic centrosome. Involved in ciliogenesis. It is required for targeted recruitment of the BBSome, CEP290, RAB8, and SSTR3 to the cilia. The protein is Afadin- and alpha-actinin-binding protein (SSX2IP) of Homo sapiens (Human).